A 331-amino-acid chain; its full sequence is DNA-directed RNA polymerase subunit alpha (331 aa).

The tract at residues 1–226 (MLIAQRPTLT…ELFGLCRELN (226 aa)) is alpha N-terminal domain (alpha-NTD). The interval 243 to 331 (TNPEMAVPIE…GGTFFSPEDE (89 aa)) is alpha C-terminal domain (alpha-CTD).

The protein belongs to the RNA polymerase alpha chain family. As to quaternary structure, homodimer. The RNAP catalytic core consists of 2 alpha, 1 beta, 1 beta' and 1 omega subunit. When a sigma factor is associated with the core the holoenzyme is formed, which can initiate transcription.

The catalysed reaction is RNA(n) + a ribonucleoside 5'-triphosphate = RNA(n+1) + diphosphate. Its function is as follows. DNA-dependent RNA polymerase catalyzes the transcription of DNA into RNA using the four ribonucleoside triphosphates as substrates. This is DNA-directed RNA polymerase subunit alpha from Bifidobacterium longum (strain NCC 2705).